We begin with the raw amino-acid sequence, 342 residues long: Protein pelota homolog (342 aa).

It belongs to the eukaryotic release factor 1 family. Pelota subfamily. As to quaternary structure, monomer. A divalent metal cation is required as a cofactor.

Its subcellular location is the cytoplasm. Functionally, may function in recognizing stalled ribosomes, interact with stem-loop structures in stalled mRNA molecules, and effect endonucleolytic cleavage of the mRNA. May play a role in the release non-functional ribosomes and degradation of damaged mRNAs. Has endoribonuclease activity. In Sulfolobus acidocaldarius (strain ATCC 33909 / DSM 639 / JCM 8929 / NBRC 15157 / NCIMB 11770), this protein is Protein pelota homolog.